Here is a 762-residue protein sequence, read N- to C-terminus: cGMP-dependent protein kinase 2 (762 aa).

Residues 1–25 (MGNGSVKPKHSKHPDGHSGNLTTDA) are disordered. Glycine 2 carries N-myristoyl glycine lipidation. The stretch at 23–85 (TDALRNKVTE…CIQLNKLQDV (63 aa)) forms a coiled coil. Phosphoserine is present on residues serine 110 and serine 117. The disordered stretch occupies residues 117–138 (SRRGAKAGVSAEPTTRTYDLNK). A cGMP-binding, high affinity; cAMP-binding, moderate affinity region spans residues 168-283 (FLKRLDPQQI…DEQYRNFLRS (116 aa)). 3',5'-cyclic AMP-binding positions include 232 to 235 (GELA) and 242 to 243 (RT). 3',5'-cyclic GMP is bound by residues 232 to 235 (GELA), 242 to 243 (RT), lysine 347, 356 to 359 (GEKA), 366 to 367 (RS), aspartate 412, and arginine 415. The interval 286-416 (LLKNLPEDKL…NLNRDDEKRH (131 aa)) is cGMP-binding, high affinity; cAMP-binding, low affinity. Serine 431 is modified (phosphoserine). One can recognise a Protein kinase domain in the interval 453 to 711 (LEIIATLGVG…INDIKKHRWL (259 aa)). Residues 459-467 (LGVGGFGRV) and lysine 482 contribute to the ATP site. Aspartate 576 serves as the catalytic Proton acceptor. Residue threonine 609 is modified to Phosphothreonine. The AGC-kinase C-terminal domain maps to 712-762 (NGFNWEGLKARSLPSPLQRELKGPIDHSYFDKYPPEKGMPPDELSGWDKDF). The interval 740-762 (YFDKYPPEKGMPPDELSGWDKDF) is disordered.

Belongs to the protein kinase superfamily. AGC Ser/Thr protein kinase family. cGMP subfamily. As to quaternary structure, interacts with GRIA1/GLUR1. In terms of processing, myristoylation mediates membrane localization. In terms of tissue distribution, highly concentrated in brain, lung and intestinal mucosa.

The protein resides in the apical cell membrane. The catalysed reaction is L-seryl-[protein] + ATP = O-phospho-L-seryl-[protein] + ADP + H(+). The enzyme catalyses L-threonyl-[protein] + ATP = O-phospho-L-threonyl-[protein] + ADP + H(+). Its activity is regulated as follows. Binding of cGMP results in enzyme activation. Its function is as follows. Crucial regulator of intestinal secretion and bone growth. Phosphorylates and activates CFTR on the plasma membrane. Plays a key role in intestinal secretion by regulating cGMP-dependent translocation of CFTR in jejunum. Acts downstream of NMDAR to activate the plasma membrane accumulation of GRIA1/GLUR1 in synapse and increase synaptic plasticity. Phosphorylates GRIA1/GLUR1 at Ser-863. Acts as a regulator of gene expression and activator of the extracellular signal-regulated kinases MAPK3/ERK1 and MAPK1/ERK2 in mechanically stimulated osteoblasts. Under fluid shear stress, mediates ERK activation and subsequent induction of FOS, FOSL1/FRA1, FOSL2/FRA2 and FOSB that play a key role in the osteoblast anabolic response to mechanical stimulation. This is cGMP-dependent protein kinase 2 (PRKG2) from Homo sapiens (Human).